An 88-amino-acid chain; its full sequence is UPF0213 protein SAG0778 (88 aa).

The 77-residue stretch at 4 to 80 (VPAYMYVLEC…QKTRQAKLTY (77 aa)) folds into the GIY-YIG domain.

This sequence belongs to the UPF0213 family.

The chain is UPF0213 protein SAG0778 from Streptococcus agalactiae serotype V (strain ATCC BAA-611 / 2603 V/R).